Here is a 391-residue protein sequence, read N- to C-terminus: Transaldolase (391 aa).

Lys134 functions as the Schiff-base intermediate with substrate in the catalytic mechanism. EF-hand domains lie at 329-364 (TLTH…FDAL) and 365-387 (DANH…VLHL). Residues Asp342, Asp344, Asp346, Glu353, Asp365, Asn367, Asp369, Lys371, and Asp376 each coordinate Ca(2+).

Belongs to the transaldolase family. Type 1 subfamily.

It localises to the cytoplasm. It catalyses the reaction D-sedoheptulose 7-phosphate + D-glyceraldehyde 3-phosphate = D-erythrose 4-phosphate + beta-D-fructose 6-phosphate. It participates in carbohydrate degradation; pentose phosphate pathway; D-glyceraldehyde 3-phosphate and beta-D-fructose 6-phosphate from D-ribose 5-phosphate and D-xylulose 5-phosphate (non-oxidative stage): step 2/3. Functionally, transaldolase is important for the balance of metabolites in the pentose-phosphate pathway. The chain is Transaldolase from Thermosynechococcus vestitus (strain NIES-2133 / IAM M-273 / BP-1).